Consider the following 174-residue polypeptide: Co-chaperone protein HscB homolog (174 aa).

A J domain is found at 2-74 (NYFELFKFPP…IRRAEHMLSL (73 aa)).

It belongs to the HscB family. Interacts with HscA and stimulates its ATPase activity.

Functionally, co-chaperone involved in the maturation of iron-sulfur cluster-containing proteins. Seems to help targeting proteins to be folded toward HscA. This is Co-chaperone protein HscB homolog from Shewanella baltica (strain OS195).